Here is a 320-residue protein sequence, read N- to C-terminus: Probable 5-dehydro-4-deoxyglucarate dehydratase (320 aa).

Belongs to the DapA family.

The enzyme catalyses 5-dehydro-4-deoxy-D-glucarate + H(+) = 2,5-dioxopentanoate + CO2 + H2O. The protein operates within carbohydrate acid metabolism; D-glucarate degradation; 2,5-dioxopentanoate from D-glucarate: step 2/2. This chain is Probable 5-dehydro-4-deoxyglucarate dehydratase, found in Streptomyces griseus subsp. griseus (strain JCM 4626 / CBS 651.72 / NBRC 13350 / KCC S-0626 / ISP 5235).